Consider the following 215-residue polypeptide: Transcription factor LAX PANICLE 1 (215 aa).

The segment at methionine 1–alanine 48 is disordered. The interval leucine 40–arginine 53 is basic motif; degenerate. The bHLH domain maps to leucine 40–leucine 89. A helix-loop-helix motif region spans residues histidine 54–leucine 89.

This sequence belongs to the bHLH protein family. In terms of assembly, efficient DNA binding requires dimerization with another bHLH protein. Interacts with LAX2. Expressed in the boundary between the shoot apical meristem (SAM) and the region of new meristem formation.

It localises to the nucleus. In terms of biological role, transcription factor that seems to regulate organogenesis in postembryonic development. Involved in the regulation of shoot branching by controlling axillary meristem initiation. Functions in association with LAX2 to regulate the process of AM formation. Possesses transactivation activity in yeast. This chain is Transcription factor LAX PANICLE 1, found in Oryza sativa subsp. japonica (Rice).